Reading from the N-terminus, the 330-residue chain is Aspartate--ammonia ligase (330 aa).

Belongs to the class-II aminoacyl-tRNA synthetase family. AsnA subfamily.

The protein localises to the cytoplasm. The enzyme catalyses L-aspartate + NH4(+) + ATP = L-asparagine + AMP + diphosphate + H(+). The protein operates within amino-acid biosynthesis; L-asparagine biosynthesis; L-asparagine from L-aspartate (ammonia route): step 1/1. The sequence is that of Aspartate--ammonia ligase from Yersinia pseudotuberculosis serotype O:1b (strain IP 31758).